A 1574-amino-acid chain; its full sequence is RNA2 polyprotein (1574 aa).

A coiled-coil region spans residues 361–422 (ERVKAFSSHH…ERLRAAKEDR (62 aa)). 2 disordered regions span residues 557-579 (PPPI…ETPG) and 863-916 (RSAT…RGYT).

In terms of processing, specific enzymatic cleavages by RNA1 encoded picornain 3C-like protease in vivo yield mature proteins.

It localises to the host cell junction. The protein localises to the host plasmodesma. It is found in the virion. Its function is as follows. Transports viral genome to neighboring plant cells directly through plasmosdesmata, without any budding. The movement protein allows efficient cell to cell propagation, by bypassing the host cell wall barrier. Acts by forming a tubular structure at the host plasmodesmata, enlarging it enough to allow free passage of virion capsids. Functionally, capsid proteins form a capsid enclosing the viral positive strand RNA genome. Together they form an icosahedral capsid pseudo T=3 with a diameter of approximately 30 nm (Potential). In Citrus unshiu (Satsuma mandarin), this protein is RNA2 polyprotein.